A 111-amino-acid chain; its full sequence is Large ribosomal subunit protein uL24 (111 aa).

Residues 85 to 111 (NTNDPRRKDIINRKASRQKEEQGGKAQ) form a disordered region. The span at 88–111 (DPRRKDIINRKASRQKEEQGGKAQ) shows a compositional bias: basic and acidic residues.

The protein belongs to the universal ribosomal protein uL24 family. As to quaternary structure, part of the 50S ribosomal subunit.

Functionally, one of two assembly initiator proteins, it binds directly to the 5'-end of the 23S rRNA, where it nucleates assembly of the 50S subunit. Located at the polypeptide exit tunnel on the outside of the subunit. In Metallosphaera sedula (strain ATCC 51363 / DSM 5348 / JCM 9185 / NBRC 15509 / TH2), this protein is Large ribosomal subunit protein uL24.